Reading from the N-terminus, the 99-residue chain is MDLAFELKKALETGKVILGSNETIRLAKTGGAKLIIVARNAPKEIKDDIYYYAKLSDIPVYEFEGTSVELGTLLGKPFVVASLAIVDPGESRILALVKR.

Belongs to the eukaryotic ribosomal protein eL30 family.

This Pyrococcus horikoshii (strain ATCC 700860 / DSM 12428 / JCM 9974 / NBRC 100139 / OT-3) protein is Large ribosomal subunit protein eL30 (rpl30e).